Consider the following 300-residue polypeptide: Shikimate kinase, chloroplastic (300 aa).

A chloroplast-targeting transit peptide spans 1–65; that stretch reads MEARVSQSLQ…SDRRVQLKVS (65 aa). 111–118 contacts ATP; sequence GMMGCGKT. Residue Thr-118 coordinates Mg(2+). Substrate is bound by residues Asp-136, Arg-161, and Gly-183. An ATP-binding site is contributed by Arg-222.

The protein belongs to the shikimate kinase family. Mg(2+) is required as a cofactor.

The protein localises to the plastid. It localises to the chloroplast. The catalysed reaction is shikimate + ATP = 3-phosphoshikimate + ADP + H(+). It participates in metabolic intermediate biosynthesis; chorismate biosynthesis; chorismate from D-erythrose 4-phosphate and phosphoenolpyruvate: step 5/7. Functionally, catalyzes the specific phosphorylation of the 3-hydroxyl group of shikimic acid using ATP as a cosubstrate. The polypeptide is Shikimate kinase, chloroplastic (SK) (Solanum lycopersicum (Tomato)).